Here is a 353-residue protein sequence, read N- to C-terminus: Photosystem II protein D1 (353 aa).

Threonine 2 is subject to N-acetylthreonine. A Phosphothreonine modification is found at threonine 2. Helical transmembrane passes span 29–46 (YIGW…TATS), 118–133 (HFLL…EWEL), and 142–156 (WIAV…AAAA). Residue histidine 118 coordinates chlorophyll a. A pheophytin a-binding site is contributed by tyrosine 126. [CaMn4O5] cluster is bound by residues aspartate 170 and glutamate 189. A helical membrane pass occupies residues 197-218 (FHMLGVAGVFGGSLFSAMHGSL). Residue histidine 198 participates in chlorophyll a binding. A quinone is bound by residues histidine 215 and 264 to 265 (SF). Residue histidine 215 coordinates Fe cation. Histidine 272 lines the Fe cation pocket. Residues 274–288 (FLAAWPVVGIWFTAL) traverse the membrane as a helical segment. [CaMn4O5] cluster-binding residues include histidine 332, glutamate 333, aspartate 342, and alanine 344. A propeptide spanning residues 345–353 (AVEAPSING) is cleaved from the precursor.

This sequence belongs to the reaction center PufL/M/PsbA/D family. PSII is composed of 1 copy each of membrane proteins PsbA, PsbB, PsbC, PsbD, PsbE, PsbF, PsbH, PsbI, PsbJ, PsbK, PsbL, PsbM, PsbT, PsbX, PsbY, PsbZ, Psb30/Ycf12, at least 3 peripheral proteins of the oxygen-evolving complex and a large number of cofactors. It forms dimeric complexes. The D1/D2 heterodimer binds P680, chlorophylls that are the primary electron donor of PSII, and subsequent electron acceptors. It shares a non-heme iron and each subunit binds pheophytin, quinone, additional chlorophylls, carotenoids and lipids. D1 provides most of the ligands for the Mn4-Ca-O5 cluster of the oxygen-evolving complex (OEC). There is also a Cl(-1) ion associated with D1 and D2, which is required for oxygen evolution. The PSII complex binds additional chlorophylls, carotenoids and specific lipids. is required as a cofactor. Post-translationally, tyr-161 forms a radical intermediate that is referred to as redox-active TyrZ, YZ or Y-Z. C-terminally processed by CTPA; processing is essential to allow assembly of the oxygen-evolving complex and thus photosynthetic growth.

The protein resides in the plastid. It is found in the chloroplast thylakoid membrane. The catalysed reaction is 2 a plastoquinone + 4 hnu + 2 H2O = 2 a plastoquinol + O2. In terms of biological role, photosystem II (PSII) is a light-driven water:plastoquinone oxidoreductase that uses light energy to abstract electrons from H(2)O, generating O(2) and a proton gradient subsequently used for ATP formation. It consists of a core antenna complex that captures photons, and an electron transfer chain that converts photonic excitation into a charge separation. The D1/D2 (PsbA/PsbD) reaction center heterodimer binds P680, the primary electron donor of PSII as well as several subsequent electron acceptors. This Vitis vinifera (Grape) protein is Photosystem II protein D1.